A 215-amino-acid chain; its full sequence is Pyrrolidone-carboxylate peptidase (215 aa).

Catalysis depends on residues Glu-80, Cys-143, and His-167.

Belongs to the peptidase C15 family. Homotetramer.

The protein localises to the cytoplasm. The enzyme catalyses Release of an N-terminal pyroglutamyl group from a polypeptide, the second amino acid generally not being Pro.. Removes 5-oxoproline from various penultimate amino acid residues except L-proline. This is Pyrrolidone-carboxylate peptidase from Pectobacterium carotovorum subsp. carotovorum (strain PC1).